The chain runs to 313 residues: Pyrimidine-specific ribonucleoside hydrolase RihB (313 aa).

The active-site Proton acceptor is the Asp-11. Residues Asp-11, Asp-16, and Val-124 each contribute to the Ca(2+) site. Substrate-binding residues include Gln-227 and His-239. Residue Asp-240 coordinates Ca(2+).

This sequence belongs to the IUNH family. RihB subfamily. Homotetramer. Requires Ca(2+) as cofactor.

It carries out the reaction a pyrimidine ribonucleoside + H2O = a pyrimidine nucleobase + D-ribose. Hydrolyzes cytidine or uridine to ribose and cytosine or uracil, respectively. Has a clear preference for cytidine over uridine. Strictly specific for ribonucleosides. The polypeptide is Pyrimidine-specific ribonucleoside hydrolase RihB (Escherichia coli O9:H4 (strain HS)).